Consider the following 280-residue polypeptide: Threonylcarbamoyl-AMP synthase (280 aa).

A mitochondrion-targeting transit peptide spans Met1–Ala56. Ser61 carries the phosphoserine modification. The YrdC-like domain occupies Thr68–Ala258.

The protein belongs to the SUA5 family. In terms of assembly, interacts with RSC1A1.

The protein localises to the cytoplasm. The protein resides in the mitochondrion. It is found in the cell membrane. It carries out the reaction L-threonine + hydrogencarbonate + ATP = L-threonylcarbamoyladenylate + diphosphate + H2O. Its function is as follows. Cytoplasmic and mitochondrial threonylcarbamoyl-AMP synthase required for the formation of a threonylcarbamoyl group on adenosine at position 37 (t(6)A37) in tRNAs that read codons beginning with adenine. Catalyzes the conversion of L-threonine, HCO(3)(-)/CO(2) and ATP to give threonylcarbamoyl-AMP (TC-AMP) as the acyladenylate intermediate, with the release of diphosphate. Participates in t(6)A37 formation in cytoplasmic and mitochondrial tRNAs. May regulate the activity of some transporters. This is Threonylcarbamoyl-AMP synthase from Rattus norvegicus (Rat).